The sequence spans 249 residues: ATP synthase subunit a, chloroplastic (249 aa).

Transmembrane regions (helical) follow at residues 40 to 60, 97 to 117, 136 to 156, 201 to 221, and 222 to 242; these read QVLI…VIAI, VPFI…GALL, INTT…AGLS, LVVV…VMFL, and GLFT…AYIG.

It belongs to the ATPase A chain family. F-type ATPases have 2 components, CF(1) - the catalytic core - and CF(0) - the membrane proton channel. CF(1) has five subunits: alpha(3), beta(3), gamma(1), delta(1), epsilon(1). CF(0) has four main subunits: a, b, b' and c.

It is found in the plastid. It localises to the chloroplast thylakoid membrane. Its function is as follows. Key component of the proton channel; it plays a direct role in the translocation of protons across the membrane. This Barbarea verna (Land cress) protein is ATP synthase subunit a, chloroplastic.